Consider the following 367-residue polypeptide: Glutamate 5-kinase (367 aa).

Lys10 lines the ATP pocket. The substrate site is built by Ser50, Asp137, and Asn149. ATP contacts are provided by residues 169–170 and 211–217; these read TD and TGGMGTK. One can recognise a PUA domain in the interval 275–353; it reads AGEITVDEGA…QQIDAILGYE (79 aa).

This sequence belongs to the glutamate 5-kinase family.

It is found in the cytoplasm. It carries out the reaction L-glutamate + ATP = L-glutamyl 5-phosphate + ADP. Its pathway is amino-acid biosynthesis; L-proline biosynthesis; L-glutamate 5-semialdehyde from L-glutamate: step 1/2. Its function is as follows. Catalyzes the transfer of a phosphate group to glutamate to form L-glutamate 5-phosphate. The chain is Glutamate 5-kinase from Enterobacter sp. (strain 638).